The primary structure comprises 294 residues: Nucleophosmin (294 aa).

Residue methionine 1 is modified to N-acetylmethionine. The segment at 1-117 is necessary for interaction with APEX1; the sequence is MEDSMDMDMS…PVHISGQHLV (117 aa). The segment at 1–186 is required for interaction with SENP3; sequence MEDSMDMDMS…DDDDFDDEEA (186 aa). Serine 4 is subject to Phosphoserine; by PLK1 and PLK2. Serine 10 carries the phosphoserine modification. Lysine 27 participates in a covalent cross-link: Glycyl lysine isopeptide (Lys-Gly) (interchain with G-Cter in SUMO2). Lysine 32 bears the N6-acetyllysine; alternate mark. Lysine 32 participates in a covalent cross-link: Glycyl lysine isopeptide (Lys-Gly) (interchain with G-Cter in SUMO1); alternate. A Glycyl lysine isopeptide (Lys-Gly) (interchain with G-Cter in SUMO2); alternate cross-link involves residue lysine 32. A Phosphoserine modification is found at serine 43. The residue at position 67 (tyrosine 67) is a Phosphotyrosine. A Phosphoserine modification is found at serine 70. A phosphothreonine mark is found at threonine 75 and threonine 95. Residues 120–132 show a composition bias toward acidic residues; that stretch reads EEDAESEDEEEED. The disordered stretch occupies residues 120–247; the sequence is EEDAESEDEE…PKGPSSVEDI (128 aa). The residue at position 125 (serine 125) is a Phosphoserine; by CDK2. Phosphoserine is present on residues serine 137 and serine 139. A Glycyl lysine isopeptide (Lys-Gly) (interchain with G-Cter in SUMO2) cross-link involves residue lysine 141. Lysine 150 bears the N6-acetyllysine; alternate mark. Lysine 150 participates in a covalent cross-link: Glycyl lysine isopeptide (Lys-Gly) (interchain with G-Cter in SUMO2); alternate. The Nuclear localization signal motif lies at 152-157; it reads PQKKVK. At lysine 154 the chain carries N6-acetyllysine. Positions 161–187 are enriched in acidic residues; the sequence is DEDDDDDDEEDDDEDDDDDDFDDEEAE. Residues 187–215 are interaction with NOP2; it reads EEKAPVKKSIRDTPAKNAQKSNQNGKDSK. Over residues 188-200 the composition is skewed to basic and acidic residues; it reads EKAPVKKSIRDTP. Positions 191–197 match the Nuclear localization signal motif; it reads PVKKSIR. Threonine 199 carries the phosphothreonine; by CDK1, CDK2 and CDK6 modification. Residues 202–222 are compositionally biased toward polar residues; that stretch reads KNAQKSNQNGKDSKPSSTPRS. Position 207 is an ADP-ribosylserine (serine 207). Lysine 212 bears the N6-acetyllysine mark. Residue lysine 215 forms a Glycyl lysine isopeptide (Lys-Gly) (interchain with G-Cter in SUMO2) linkage. Phosphothreonine; by CDK1 is present on threonine 219. Residues 223 to 235 show a composition bias toward basic and acidic residues; sequence KGQESFKKQEKTP. Residue serine 227 is modified to Phosphoserine. Lysine 229 carries the post-translational modification N6-acetyllysine. Position 230 is an N6-acetyllysine; alternate (lysine 230). Lysine 230 participates in a covalent cross-link: Glycyl lysine isopeptide (Lys-Gly) (interchain with G-Cter in SUMO); alternate. Phosphothreonine; by CDK1 occurs at positions 234 and 237. Serine 242 and serine 243 each carry phosphoserine. The segment at 243 to 294 is required for nucleolar localization; that stretch reads SVEDIKAKMQASIEKGGSLPKVEAKFINYVKNCFRMTDQEAIQDLWQWRKSL. Lysine 248 is covalently cross-linked (Glycyl lysine isopeptide (Lys-Gly) (interchain with G-Cter in SUMO1); alternate). Residues lysine 248 and lysine 250 each participate in a glycyl lysine isopeptide (Lys-Gly) (interchain with G-Cter in SUMO2); alternate cross-link. N6-acetyllysine; alternate is present on lysine 250. Position 254 is a phosphoserine (serine 254). The residue at position 257 (lysine 257) is an N6-acetyllysine; alternate. Lysine 257 is covalently cross-linked (Glycyl lysine isopeptide (Lys-Gly) (interchain with G-Cter in SUMO1); alternate). Residue lysine 257 forms a Glycyl lysine isopeptide (Lys-Gly) (interchain with G-Cter in SUMO2); alternate linkage. Residue lysine 257 is modified to N6-acetyllysine. Residue serine 260 is modified to Phosphoserine. Residues lysine 263, lysine 267, and lysine 273 each participate in a glycyl lysine isopeptide (Lys-Gly) (interchain with G-Cter in SUMO2); alternate cross-link. Lysine 263 participates in a covalent cross-link: Glycyl lysine isopeptide (Lys-Gly) (interchain with G-Cter in SUMO); alternate. Lysine 267 and lysine 273 each carry N6-acetyllysine; alternate. A Glycyl lysine isopeptide (Lys-Gly) (interchain with G-Cter in SUMO1); alternate cross-link involves residue lysine 267. Lysine 267 is subject to N6-succinyllysine; alternate. Threonine 279 bears the Phosphothreonine mark. An N6-acetyllysine modification is found at lysine 292.

The protein belongs to the nucleoplasmin family. As to quaternary structure, decamer formed by two pentameric rings associated in a head-to-head fashion. Disulfide-linked dimers under certain conditions. The SWAP complex consists of NPM1, NCL, PARP1 and SWAP70. Interacts with NSUN2 and SENP3. Interacts with the methylated form of RPS10. Interacts (via N-terminal domain) with APEX1; the interaction is RNA-dependent and decreases in hydrogen peroxide-damaged cells. Interacts with isoform 1 of NEK2. Interacts with ROCK2 and BRCA2. Interacts with RPGR. Interacts with CENPW. Interacts with EIF2AK2/PKR. Interacts with CEBPA (isoform 4). Interacts with DDX31; this interaction prevents interaction between NPM1 and HDM2. Interacts with MYC; competitive with NOP53. Interacts with NOP53; the interaction is direct and competitive with MYC. Interacts with LRRC34. Interacts with RRP1B. Interacts with NPM3. Interacts with ALKBH2. Interacts with TTF1 (via C-terminal region). Interacts with NOP2. Interacts with ARID3C (via REKLES DOMAIN); the interaction mediates ARID3C nuclear shuttling. (Microbial infection) Interacts with hepatitis delta virus S-HDAg. In terms of assembly, (Microbial infection) Interacts with HTLV1 Rex protein (via N-terminal nuclear localization signal). In terms of processing, acetylated at C-terminal lysine residues, thereby increasing affinity to histones. ADP-ribosylated. Post-translationally, phosphorylated at Ser-4 by PLK1 and PLK2. Phosphorylation at Ser-4 by PLK2 in S phase is required for centriole duplication and is sufficient to trigger centriole replication. Phosphorylation at Ser-4 by PLK1 takes place during mitosis. Phosphorylated by CDK2 at Ser-125 and Thr-199. Phosphorylation at Thr-199 may trigger initiation of centrosome duplication. Phosphorylated by CDK1 at Thr-199, Thr-219, Thr-234 and Thr-237 during cell mitosis. When these four sites are phosphorated, RNA-binding activity seem to be abolished. May be phosphorylated at Ser-70 by NEK2. The Thr-199 phosphorylated form has higher affinity for ROCK2. CDK6 triggers Thr-199 phosphorylation when complexed to Kaposi's sarcoma herpesvirus (KSHV) V-cyclin, leading to viral reactivation by reducing viral LANA levels. In terms of processing, sumoylated by ARF. Ubiquitinated. Ubiquitination leads to proteasomal degradation. Deubiquitinated by USP36.

It localises to the nucleus. The protein resides in the nucleolus. It is found in the nucleoplasm. The protein localises to the cytoplasm. Its subcellular location is the cytoskeleton. It localises to the microtubule organizing center. The protein resides in the centrosome. Involved in diverse cellular processes such as ribosome biogenesis, centrosome duplication, protein chaperoning, histone assembly, cell proliferation, and regulation of tumor suppressors p53/TP53 and ARF. Binds ribosome presumably to drive ribosome nuclear export. Associated with nucleolar ribonucleoprotein structures and bind single-stranded nucleic acids. Acts as a chaperonin for the core histones H3, H2B and H4. Stimulates APEX1 endonuclease activity on apurinic/apyrimidinic (AP) double-stranded DNA but inhibits APEX1 endonuclease activity on AP single-stranded RNA. May exert a control of APEX1 endonuclease activity within nucleoli devoted to repair AP on rDNA and the removal of oxidized rRNA molecules. In concert with BRCA2, regulates centrosome duplication. Regulates centriole duplication: phosphorylation by PLK2 is able to trigger centriole replication. Negatively regulates the activation of EIF2AK2/PKR and suppresses apoptosis through inhibition of EIF2AK2/PKR autophosphorylation. Antagonizes the inhibitory effect of ATF5 on cell proliferation and relieves ATF5-induced G2/M blockade. In complex with MYC enhances the transcription of MYC target genes. May act as chaperonin or cotransporter in the nucleolar localization of transcription termination factor TTF1. The chain is Nucleophosmin from Homo sapiens (Human).